We begin with the raw amino-acid sequence, 314 residues long: tRNA pseudouridine synthase B (314 aa).

H43 contributes to the substrate binding site. The Nucleophile role is filled by D48. Substrate contacts are provided by Y76, Y179, and L200.

It belongs to the pseudouridine synthase TruB family. Type 1 subfamily.

It catalyses the reaction uridine(55) in tRNA = pseudouridine(55) in tRNA. Responsible for synthesis of pseudouridine from uracil-55 in the psi GC loop of transfer RNAs. In Salmonella typhi, this protein is tRNA pseudouridine synthase B.